We begin with the raw amino-acid sequence, 183 residues long: Protein US32 (183 aa).

Belongs to the herpesviridae US1 family.

In Homo sapiens (Human), this protein is Protein US32 (US32).